Reading from the N-terminus, the 563-residue chain is MVYFRAHQPRHTPKTFPLEVHHSFSDKHPQIAKAMRITGIALAALSLLAVVACVIAVSAGGAAIPLAVISGIAVMSGLLSAATIICSAKKALAQRKQKQLEESLPLDNATEHVSYLTSDTSYFNQWESLGALNKQLSQIDLTIQAPEKKLLKEVLGSRYDSINHSIEEISDRFTKMLSLLRLREHFYRGEERYAPYLSPPLLNKNRLLTQITSNMIRMLPKSGGVFSLKANTLSHASRTLYTVLKVALSLGVLAGVAALIIFLPPSLPFIAVIGVSSLALGMASFLMIRGIKYLLEHSPLNRKQLAKDIQKTIGPDVLASMVHYQHQLLSHLHETLLDEAITARWSEPFFIEHANLKAKIEDLTKQYDILNAAFNKSLQQDEALRSQLEKRAYLFPIPNNDENAKTKESQLLDSENDSNSEFQEIINKGLEAANKRRADAKSKFYTEDETSDKIFSIWKPTKNLALEDLWRVHEACNEEQQALLLEDYMSYKTSECQAALQKVSQELKAAQKSFAVLEKHALDRSYESSVATMDLARANQETHRLLNILSELQQLAQYLLDNH.

Topologically, residues 1 to 36 (MVYFRAHQPRHTPKTFPLEVHHSFSDKHPQIAKAMR) are cytoplasmic. A helical membrane pass occupies residues 37-57 (ITGIALAALSLLAVVACVIAV). Serine 58 is a topological domain (vacuolar). Residues 59–79 (AGGAAIPLAVISGIAVMSGLL) traverse the membrane as a helical segment. Topologically, residues 80 to 252 (SAATIICSAK…VLKVALSLGV (173 aa)) are cytoplasmic. A helical transmembrane segment spans residues 253–273 (LAGVAALIIFLPPSLPFIAVI). Glycine 274 is a topological domain (vacuolar). A helical transmembrane segment spans residues 275–295 (VSSLALGMASFLMIRGIKYLL). At 296–563 (EHSPLNRKQL…QLAQYLLDNH (268 aa)) the chain is on the cytoplasmic side.

It belongs to the chlamydial CPn_0065/CT_288/TC_0561 family. Interacts with host CCDC146. In host cells infected with C.trachomatis incM, CCDC146 is recruited to the periphery of the pathogen-containing vacuole but recruitment is not dependent on incM.

Its subcellular location is the host vacuole. It is found in the host pathogen-containing vacuole. The protein localises to the host pathogen-containing vacuole membrane. It localises to the host pathogen-containing vacuole lumen. The protein resides in the secreted. Its function is as follows. Interferes with host cell cytokinesis, centrosome positioning and Golgi distribution, and contributes to the morphology and stability of the pathogen-containing vacuole. May exert its effects by acting directly or indirectly on host microtubules. This chain is Inclusion membrane protein M, found in Chlamydia trachomatis serovar D (strain ATCC VR-885 / DSM 19411 / UW-3/Cx).